The chain runs to 392 residues: Succinyl-diaminopimelate desuccinylase (392 aa).

H71 serves as a coordination point for Zn(2+). The active site involves D73. A Zn(2+)-binding site is contributed by D102. Residue E144 is the Proton acceptor of the active site. Zn(2+) is bound by residues E145, E173, and H362.

Belongs to the peptidase M20A family. DapE subfamily. Homodimer. It depends on Zn(2+) as a cofactor. Co(2+) is required as a cofactor.

The catalysed reaction is N-succinyl-(2S,6S)-2,6-diaminopimelate + H2O = (2S,6S)-2,6-diaminopimelate + succinate. Its pathway is amino-acid biosynthesis; L-lysine biosynthesis via DAP pathway; LL-2,6-diaminopimelate from (S)-tetrahydrodipicolinate (succinylase route): step 3/3. Its function is as follows. Catalyzes the hydrolysis of N-succinyl-L,L-diaminopimelic acid (SDAP), forming succinate and LL-2,6-diaminopimelate (DAP), an intermediate involved in the bacterial biosynthesis of lysine and meso-diaminopimelic acid, an essential component of bacterial cell walls. The protein is Succinyl-diaminopimelate desuccinylase of Rhodospirillum rubrum (strain ATCC 11170 / ATH 1.1.1 / DSM 467 / LMG 4362 / NCIMB 8255 / S1).